The chain runs to 299 residues: MLIIYRSNSLTAKEASIFCNKTLKERNIKSKRIESDFDNNQLENYFYNLAALPDLVIVLGGDGTVLKSANALVNYDIPILSFNIGGNLGFLTQEKDFLFDQSFIKILEKEEFIIDFRNRLHCDVYSNEKNRERKILKSYDALNDFYFKSVEEDISPTNQIQIEIDNEKVNEYKGDGLIISSSTGSTAYSMAAGGPIVHPSINAFVINPICPMSLASRPIIIPDTSKVVIRVVQKNKREIKLWKDGSKCMTIKENDYCEINKVTKPCKMIKFNKSISYYITLIKKLDWKGDLSLKNNQNN.

Asp62 serves as the catalytic Proton acceptor. NAD(+)-binding positions include 62-63 (DG), Lys67, 143-144 (ND), Lys173, and Asp175.

It belongs to the NAD kinase family. A divalent metal cation is required as a cofactor.

Its subcellular location is the cytoplasm. It catalyses the reaction NAD(+) + ATP = ADP + NADP(+) + H(+). Its function is as follows. Involved in the regulation of the intracellular balance of NAD and NADP, and is a key enzyme in the biosynthesis of NADP. Catalyzes specifically the phosphorylation on 2'-hydroxyl of the adenosine moiety of NAD to yield NADP. In Prochlorococcus marinus subsp. pastoris (strain CCMP1986 / NIES-2087 / MED4), this protein is NAD kinase 1.